Reading from the N-terminus, the 329-residue chain is GTPase Obg (329 aa).

Residues methionine 1–leucine 159 form the Obg domain. Residues alanine 160 to glycine 328 form the OBG-type G domain. ATP-binding positions include glycine 166–serine 173, phenylalanine 191–isoleucine 195, aspartate 213–glycine 216, asparagine 280–glutamate 283, and serine 309–alanine 311. Mg(2+) is bound by residues serine 173 and threonine 193.

The protein belongs to the TRAFAC class OBG-HflX-like GTPase superfamily. OBG GTPase family. As to quaternary structure, monomer. Mg(2+) is required as a cofactor.

It is found in the cytoplasm. Its function is as follows. An essential GTPase which binds GTP, GDP and possibly (p)ppGpp with moderate affinity, with high nucleotide exchange rates and a fairly low GTP hydrolysis rate. Plays a role in control of the cell cycle, stress response, ribosome biogenesis and in those bacteria that undergo differentiation, in morphogenesis control. This is GTPase Obg from Synechococcus sp. (strain CC9311).